The following is a 243-amino-acid chain: 4-hydroxy-tetrahydrodipicolinate reductase (243 aa).

Residues 9–14 (GANGKM), 78–80 (GTS), and 104–107 (APNF) each bind NAD(+). Residue His134 is the Proton donor/acceptor of the active site. Position 135 (His135) interacts with (S)-2,3,4,5-tetrahydrodipicolinate. Catalysis depends on Lys138, which acts as the Proton donor. 144–145 (GT) provides a ligand contact to (S)-2,3,4,5-tetrahydrodipicolinate.

This sequence belongs to the DapB family.

It localises to the cytoplasm. It catalyses the reaction (S)-2,3,4,5-tetrahydrodipicolinate + NAD(+) + H2O = (2S,4S)-4-hydroxy-2,3,4,5-tetrahydrodipicolinate + NADH + H(+). The enzyme catalyses (S)-2,3,4,5-tetrahydrodipicolinate + NADP(+) + H2O = (2S,4S)-4-hydroxy-2,3,4,5-tetrahydrodipicolinate + NADPH + H(+). The protein operates within amino-acid biosynthesis; L-lysine biosynthesis via DAP pathway; (S)-tetrahydrodipicolinate from L-aspartate: step 4/4. Catalyzes the conversion of 4-hydroxy-tetrahydrodipicolinate (HTPA) to tetrahydrodipicolinate. The sequence is that of 4-hydroxy-tetrahydrodipicolinate reductase from Legionella pneumophila (strain Paris).